Consider the following 257-residue polypeptide: Small ribosomal subunit protein uS2 (257 aa).

The interval 229–257 is disordered; that stretch reads QFTPATTSSQEVDKASEQVEIAADDIDEE.

This sequence belongs to the universal ribosomal protein uS2 family.

The chain is Small ribosomal subunit protein uS2 from Caldicellulosiruptor bescii (strain ATCC BAA-1888 / DSM 6725 / KCTC 15123 / Z-1320) (Anaerocellum thermophilum).